Here is a 139-residue protein sequence, read N- to C-terminus: General odorant-binding protein 56a (139 aa).

The first 19 residues, M1–G19, serve as a signal peptide directing secretion. N-linked (GlcNAc...) asparagine glycosylation occurs at N23. Intrachain disulfides connect C39/C71, C67/C118, and C109/C127.

Belongs to the PBP/GOBP family. In terms of tissue distribution, expressed in ventral pits of larvae. In adults, it is not specifically expressed in chemosensory organs. Also expressed in stalk cells at the proximal tip of the wing disk.

It localises to the secreted. In terms of biological role, present in the aqueous fluid surrounding olfactory sensory dendrites and are thought to aid in the capture and transport of hydrophobic odorants into and through this fluid. This chain is General odorant-binding protein 56a (Obp56a), found in Drosophila melanogaster (Fruit fly).